Consider the following 324-residue polypeptide: Beta-ketoacyl-[acyl-carrier-protein] synthase III (324 aa).

Cysteine 112 is a catalytic residue. The tract at residues 181–202 is disordered; the sequence is TDGSRGQNLTSGNNPLRSPFSD. Residues 184–196 show a composition bias toward polar residues; sequence SRGQNLTSGNNPL. The active site involves histidine 249. The ACP-binding stretch occupies residues 250-254; sequence QANRR. The active site involves asparagine 279.

The protein belongs to the thiolase-like superfamily. FabH family. Homodimer.

The protein localises to the cytoplasm. The enzyme catalyses malonyl-[ACP] + acetyl-CoA + H(+) = 3-oxobutanoyl-[ACP] + CO2 + CoA. The protein operates within lipid metabolism; fatty acid biosynthesis. Its function is as follows. Catalyzes the condensation reaction of fatty acid synthesis by the addition to an acyl acceptor of two carbons from malonyl-ACP. Catalyzes the first condensation reaction which initiates fatty acid synthesis and may therefore play a role in governing the total rate of fatty acid production. Possesses both acetoacetyl-ACP synthase and acetyl transacylase activities. Its substrate specificity determines the biosynthesis of branched-chain and/or straight-chain of fatty acids. The sequence is that of Beta-ketoacyl-[acyl-carrier-protein] synthase III from Streptococcus uberis (strain ATCC BAA-854 / 0140J).